Here is a 382-residue protein sequence, read N- to C-terminus: Galactokinase (382 aa).

A substrate-binding site is contributed by 34-37 (EHTD). Residue 124 to 130 (GAGLSSS) coordinates ATP. Residues serine 130 and glutamate 162 each coordinate Mg(2+). Residue aspartate 174 is the Proton acceptor of the active site. Residue tyrosine 223 participates in substrate binding.

The protein belongs to the GHMP kinase family. GalK subfamily.

The protein resides in the cytoplasm. The enzyme catalyses alpha-D-galactose + ATP = alpha-D-galactose 1-phosphate + ADP + H(+). Its pathway is carbohydrate metabolism; galactose metabolism. Functionally, catalyzes the transfer of the gamma-phosphate of ATP to D-galactose to form alpha-D-galactose-1-phosphate (Gal-1-P). The chain is Galactokinase from Escherichia coli O81 (strain ED1a).